The primary structure comprises 352 residues: Rhodopsin (352 aa).

Topologically, residues 1–36 (MNGTEGPFFYIPMVNTTGIVRSPYEYPQYYLVNPAA) are extracellular. 2 N-linked (GlcNAc...) asparagine glycosylation sites follow: Asn2 and Asn15. Residues 37 to 61 (YAALGAYMFFLILTGFPINFLTLYV) form a helical membrane-spanning segment. Over 62-73 (TLEHKKLRTALN) the chain is Cytoplasmic. Residues 74 to 96 (LILLNLAVADLFMVFGGFTTTMY) traverse the membrane as a helical segment. The Extracellular portion of the chain corresponds to 97–110 (TSMHGYFVLGRLGC). A disulfide bridge links Cys110 with Cys187. The helical transmembrane segment at 111–133 (NVEGFFATLGGEIALWSLVVLAV) threads the bilayer. Positions 134–136 (ERW) match the 'Ionic lock' involved in activated form stabilization motif. Residues 134–152 (ERWVVVCKPISNFRFTENH) lie on the Cytoplasmic side of the membrane. The chain crosses the membrane as a helical span at residues 153–173 (AIMGVAFSWIMAATCAVPPLV). Residues 174–202 (GWSRYIPEGMQCSCGVDYYTRAEGFNNES) lie on the Extracellular side of the membrane. A helical transmembrane segment spans residues 203-224 (FVIYMFIVHFLAPLIVIFFCYG). Residues 225 to 252 (RLLCAVKEAAAAQQESETTQRAEREVTR) lie on the Cytoplasmic side of the membrane. Residues 253–274 (MVIIMVIGFLTSWLPYASVAWY) form a helical membrane-spanning segment. The Extracellular segment spans residues 275–286 (IFTHQGTEFGPL). A helical transmembrane segment spans residues 287–308 (FMTIPAFFAKSSALYNPMIYIC). At Lys296 the chain carries N6-(retinylidene)lysine. Over 309 to 352 (MNKQFRHCMITTLCCGKNPFEEEEGASTTKTEASSVSSSSVSPA) the chain is Cytoplasmic. S-palmitoyl cysteine attachment occurs at residues Cys322 and Cys323. A disordered region spans residues 331 to 352 (EEGASTTKTEASSVSSSSVSPA). Residues 342 to 352 (SSVSSSSVSPA) are compositionally biased toward low complexity.

It belongs to the G-protein coupled receptor 1 family. Opsin subfamily. Phosphorylated on some or all of the serine and threonine residues present in the C-terminal region. In terms of processing, contains one covalently linked retinal chromophore.

The protein localises to the membrane. The protein resides in the cell projection. It is found in the cilium. It localises to the photoreceptor outer segment. Photoreceptor required for image-forming vision at low light intensity. While most salt water fish species use retinal as chromophore, most freshwater fish use 3-dehydroretinal, or a mixture of retinal and 3-dehydroretinal. Light-induced isomerization of 11-cis to all-trans retinal triggers a conformational change that activates signaling via G-proteins. Subsequent receptor phosphorylation mediates displacement of the bound G-protein alpha subunit by arrestin and terminates signaling. The polypeptide is Rhodopsin (rho) (Pomatoschistus minutus (Sand goby)).